A 602-amino-acid polypeptide reads, in one-letter code: ATP-dependent RNA helicase DeaD (602 aa).

Positions 6–34 (MTFSSFGLNSCIITALNDIGYVQPSPIQA) match the Q motif motif. The Helicase ATP-binding domain occupies 37-208 (IPYLIKGKDV…RRFMKNPKEI (172 aa)). 50–57 (AQTGSGKT) lines the ATP pocket. The short motif at 156 to 159 (DEAD) is the DEAD box element. In terms of domain architecture, Helicase C-terminal spans 231 to 378 (KTDALIRFLE…EVNLPKSDFL (148 aa)).

This sequence belongs to the DEAD box helicase family. DeaD/CsdA subfamily.

The protein resides in the cytoplasm. The enzyme catalyses ATP + H2O = ADP + phosphate + H(+). In terms of biological role, DEAD-box RNA helicase involved in various cellular processes at low temperature, including ribosome biogenesis, mRNA degradation and translation initiation. The chain is ATP-dependent RNA helicase DeaD from Buchnera aphidicola subsp. Baizongia pistaciae (strain Bp).